Consider the following 500-residue polypeptide: Glycerol kinase (500 aa).

T15 provides a ligand contact to ADP. Positions 15, 16, and 17 each coordinate ATP. Residue T15 coordinates sn-glycerol 3-phosphate. R19 is an ADP binding site. Residues R85, E86, Y137, and D245 each contribute to the sn-glycerol 3-phosphate site. Glycerol is bound by residues R85, E86, Y137, D245, and Q246. ADP contacts are provided by T267 and G310. 4 residues coordinate ATP: T267, G310, Q314, and G411. ADP-binding residues include G411 and N415.

Belongs to the FGGY kinase family.

It catalyses the reaction glycerol + ATP = sn-glycerol 3-phosphate + ADP + H(+). It participates in polyol metabolism; glycerol degradation via glycerol kinase pathway; sn-glycerol 3-phosphate from glycerol: step 1/1. Inhibited by fructose 1,6-bisphosphate (FBP). Functionally, key enzyme in the regulation of glycerol uptake and metabolism. Catalyzes the phosphorylation of glycerol to yield sn-glycerol 3-phosphate. This Aeromonas salmonicida (strain A449) protein is Glycerol kinase.